A 231-amino-acid polypeptide reads, in one-letter code: Ninja-family protein AFP3 (231 aa).

Basic residues predominate over residues 83–96 (AKRKRSEKQRKHKA). A disordered region spans residues 83 to 152 (AKRKRSEKQR…SAQSQPENLG (70 aa)). The segment covering 130 to 152 (QATTNKSVETSPSSAQSQPENLG) has biased composition (polar residues).

Belongs to the Ninja family. As to quaternary structure, forms a heterodimer with AFP2. Interacts with ABI5/DPBF1, DPBF2, AREB3/DPBF3, EEL/DPBF4, ABF1, ABF3/DPBF5 and ABF4/AREB2.

Its subcellular location is the nucleus. Functionally, acts as a negative regulator of abscisic acid (ABA) response and stress responses. The protein is Ninja-family protein AFP3 (AFP3) of Arabidopsis thaliana (Mouse-ear cress).